The following is a 550-amino-acid chain: DNA-directed RNA polymerase subunit alpha (550 aa).

The interval 1–333 (MTIYPNLKKI…QENNLFRSEK (333 aa)) is alpha N-terminal domain (alpha-NTD). Residues 185-258 (TTLKKRNILL…TSLGHDTVSN (74 aa)) are insert. The interval 378 to 550 (FLNQSLGQNK…SLTFEYARKF (173 aa)) is alpha C-terminal domain (alpha-CTD).

This sequence belongs to the RNA polymerase alpha chain family. As to quaternary structure, in plastids the minimal PEP RNA polymerase catalytic core is composed of four subunits: alpha, beta, beta', and beta''. When a (nuclear-encoded) sigma factor is associated with the core the holoenzyme is formed, which can initiate transcription.

The protein resides in the plastid. It is found in the chloroplast. The catalysed reaction is RNA(n) + a ribonucleoside 5'-triphosphate = RNA(n+1) + diphosphate. DNA-dependent RNA polymerase catalyzes the transcription of DNA into RNA using the four ribonucleoside triphosphates as substrates. This chain is DNA-directed RNA polymerase subunit alpha (rpoA), found in Chlamydomonas reinhardtii (Chlamydomonas smithii).